We begin with the raw amino-acid sequence, 1351 residues long: Tripartite motif-containing protein 66 (1351 aa).

Residues 105-150 (MARNCSECKEKRAAHILCTYCNRWLCSSCTEEHRHSPVPGGPFFPR) form a B box-type 1; atypical zinc finger. Residues Cys109, Cys112, Cys133, His139, Cys169, His172, Cys192, and His197 each coordinate Zn(2+). The segment at 164-205 (DFTLYCPLHTQEVLKLFCETCDMLTCHSCLVVEHKEHRCRHV) adopts a B box-type 2 zinc-finger fold. Positions 234–304 (AKQIEDRIFE…IMVLNRQFEH (71 aa)) form a coiled coil. 3 disordered regions span residues 542-608 (FGHH…CSQN), 663-730 (APVQ…VRKH), and 857-895 (CPLQ…DPSL). Over residues 560–588 (QLPPPPPPLPHPPPPLPPPPQQPHPPLPP) the composition is skewed to pro residues. Residues 664–676 (PVQSQSQEETLQA) are compositionally biased toward polar residues. Residues 872 to 884 (TGSSSSSGRTSGS) show a composition bias toward low complexity. Positions 995 to 999 (PYVRL) match the PxVxL motif motif. A disordered region spans residues 1067–1098 (TSLAGQRPPEVEGTSPEEHRLIPRTPGAKKGP). A PHD-type zinc finger spans residues 1105-1152 (EDFCAVCLNGGELLCCDRCPKVFHLSCHVPALLSFPGGEWVCTLCRSL). The Bromo domain occupies 1176–1282 (GLSMYDQKKC…VFFEGWLKEI (107 aa)). The disordered stretch occupies residues 1289 to 1351 (AQPRQEDSDS…FRLANSISQV (63 aa)).

As to quaternary structure, can form homodimers and heterodimers. Interacts with CBX5, CBX1 and CBX3 via PxVxL motif.

Its subcellular location is the nucleus. May function as transcription repressor; The repressive effects are mediated, at least in part, by recruitment of deacetylase activity. May play a role as negative regulator of postmeiotic genes acting through CBX3 complex formation and centromere association. The sequence is that of Tripartite motif-containing protein 66 (TRIM66) from Homo sapiens (Human).